We begin with the raw amino-acid sequence, 782 residues long: E3 ubiquitin-protein ligase SopA (782 aa).

The disordered stretch occupies residues V137 to A171. The segment covering P157–A171 has biased composition (low complexity). C753 (glycyl thioester intermediate) is an active-site residue.

It belongs to the SopA E3 ligase family. Post-translationally, ubiquitinated in the presence of host E1 ubiquitin-activating enzyme, E2 ubiquitin-conjugating enzyme and ubiquitin.

It localises to the secreted. The protein localises to the host cell. It catalyses the reaction S-ubiquitinyl-[E2 ubiquitin-conjugating enzyme]-L-cysteine + [acceptor protein]-L-lysine = [E2 ubiquitin-conjugating enzyme]-L-cysteine + N(6)-ubiquitinyl-[acceptor protein]-L-lysine.. Effector proteins function to alter host cell physiology and promote bacterial survival in host tissues. This protein is an E3 ubiquitin ligase that interferes with host's ubiquitination pathway. In Salmonella dublin (strain CT_02021853), this protein is E3 ubiquitin-protein ligase SopA (sopA).